The primary structure comprises 143 residues: Peptide methionine sulfoxide reductase MsrB (143 aa).

Positions 16 to 139 (DAELRRRLTP…NSAALNFESR (124 aa)) constitute a MsrB domain. Cysteine 55, cysteine 58, cysteine 104, and cysteine 107 together coordinate Zn(2+). Catalysis depends on cysteine 128, which acts as the Nucleophile.

This sequence belongs to the MsrB Met sulfoxide reductase family. Zn(2+) serves as cofactor.

The catalysed reaction is L-methionyl-[protein] + [thioredoxin]-disulfide + H2O = L-methionyl-(R)-S-oxide-[protein] + [thioredoxin]-dithiol. This Burkholderia ambifaria (strain MC40-6) protein is Peptide methionine sulfoxide reductase MsrB.